The following is a 103-amino-acid chain: Large ribosomal subunit protein bL21 (103 aa).

Belongs to the bacterial ribosomal protein bL21 family. As to quaternary structure, part of the 50S ribosomal subunit. Contacts protein L20.

In terms of biological role, this protein binds to 23S rRNA in the presence of protein L20. This chain is Large ribosomal subunit protein bL21, found in Methylococcus capsulatus (strain ATCC 33009 / NCIMB 11132 / Bath).